A 302-amino-acid chain; its full sequence is tRNA dimethylallyltransferase (302 aa).

7–14 (GPTASGKS) lines the ATP pocket. Substrate is bound at residue 9 to 14 (TASGKS). 2 interaction with substrate tRNA regions span residues 32 to 35 (DSMQ) and 156 to 160 (QRILR).

The protein belongs to the IPP transferase family. As to quaternary structure, monomer. Mg(2+) is required as a cofactor.

It carries out the reaction adenosine(37) in tRNA + dimethylallyl diphosphate = N(6)-dimethylallyladenosine(37) in tRNA + diphosphate. In terms of biological role, catalyzes the transfer of a dimethylallyl group onto the adenine at position 37 in tRNAs that read codons beginning with uridine, leading to the formation of N6-(dimethylallyl)adenosine (i(6)A). The chain is tRNA dimethylallyltransferase from Beijerinckia indica subsp. indica (strain ATCC 9039 / DSM 1715 / NCIMB 8712).